A 331-amino-acid polypeptide reads, in one-letter code: MKKPVVIGLAIAAIVAVIAGGTWWYQSRQDDGLTLYGNVDIRTVNISFRVGGRLASLNVDEGDAIKAGQVLGELDHAPYENALMQAKAGVSVAQAQYDLMLAGYRDEEIAQAAAAVRQAQAAYDYAQNFYNRQQGLWKSRTISANDLENARSSRDQAQATLKSAQDKLSQYRTGNREQDIAQAKASLEQAKAQLAQAQLDLQDTTLIAPANGTLLTRAVEPGSMLNAGSTVLTLSLTRPVWVRAYVDERNLSQTQPGRDILLYTDGRPDKPYHGKIGFVSPTAEFTPKTVETPDLRTDLVYRLRIIVTDADDALRQGMPVTVKFNDEARHE.

The N-terminal stretch at 1–19 (MKKPVVIGLAIAAIVAVIA) is a signal peptide. Residues 107-208 (EEIAQAAAAV…LDLQDTTLIA (102 aa)) adopt a coiled-coil conformation.

The protein belongs to the UPF0194 family.

It localises to the periplasm. The protein is UPF0194 membrane protein YbhG of Salmonella heidelberg (strain SL476).